We begin with the raw amino-acid sequence, 356 residues long: UDP-N-acetylglucosamine--N-acetylmuramyl-(pentapeptide) pyrophosphoryl-undecaprenol N-acetylglucosamine transferase (356 aa).

Residues 12-14 (TAG), Arg-166, Ser-196, and Gln-291 contribute to the UDP-N-acetyl-alpha-D-glucosamine site.

Belongs to the glycosyltransferase 28 family. MurG subfamily.

Its subcellular location is the cell membrane. It carries out the reaction di-trans,octa-cis-undecaprenyl diphospho-N-acetyl-alpha-D-muramoyl-L-alanyl-D-glutamyl-meso-2,6-diaminopimeloyl-D-alanyl-D-alanine + UDP-N-acetyl-alpha-D-glucosamine = di-trans,octa-cis-undecaprenyl diphospho-[N-acetyl-alpha-D-glucosaminyl-(1-&gt;4)]-N-acetyl-alpha-D-muramoyl-L-alanyl-D-glutamyl-meso-2,6-diaminopimeloyl-D-alanyl-D-alanine + UDP + H(+). Its pathway is cell wall biogenesis; peptidoglycan biosynthesis. Functionally, cell wall formation. Catalyzes the transfer of a GlcNAc subunit on undecaprenyl-pyrophosphoryl-MurNAc-pentapeptide (lipid intermediate I) to form undecaprenyl-pyrophosphoryl-MurNAc-(pentapeptide)GlcNAc (lipid intermediate II). The chain is UDP-N-acetylglucosamine--N-acetylmuramyl-(pentapeptide) pyrophosphoryl-undecaprenol N-acetylglucosamine transferase from Geobacillus thermodenitrificans (strain NG80-2).